A 415-amino-acid polypeptide reads, in one-letter code: 4-hydroxy-3-methylbut-2-en-1-yl diphosphate synthase (flavodoxin) (415 aa).

The [4Fe-4S] cluster site is built by cysteine 298, cysteine 301, cysteine 344, and glutamate 351.

This sequence belongs to the IspG family. [4Fe-4S] cluster is required as a cofactor.

The catalysed reaction is (2E)-4-hydroxy-3-methylbut-2-enyl diphosphate + oxidized [flavodoxin] + H2O + 2 H(+) = 2-C-methyl-D-erythritol 2,4-cyclic diphosphate + reduced [flavodoxin]. It functions in the pathway isoprenoid biosynthesis; isopentenyl diphosphate biosynthesis via DXP pathway; isopentenyl diphosphate from 1-deoxy-D-xylulose 5-phosphate: step 5/6. Its function is as follows. Converts 2C-methyl-D-erythritol 2,4-cyclodiphosphate (ME-2,4cPP) into 1-hydroxy-2-methyl-2-(E)-butenyl 4-diphosphate. This is 4-hydroxy-3-methylbut-2-en-1-yl diphosphate synthase (flavodoxin) from Solibacter usitatus (strain Ellin6076).